The chain runs to 290 residues: 4-hydroxybenzoate octaprenyltransferase (290 aa).

8 helical membrane-spanning segments follow: residues 23–43, 46–66, 99–119, 141–161, 163–183, 213–233, 234–254, and 268–288; these read IGAL…TPGV, LWIL…GCVV, LFVV…TMTI, LPQV…FAAV, ESVP…AVAY, LIIG…GELN, GLGW…VYQQ, and AFMN…MSYW.

Belongs to the UbiA prenyltransferase family. The cofactor is Mg(2+).

The protein resides in the cell inner membrane. It carries out the reaction all-trans-octaprenyl diphosphate + 4-hydroxybenzoate = 4-hydroxy-3-(all-trans-octaprenyl)benzoate + diphosphate. It participates in cofactor biosynthesis; ubiquinone biosynthesis. Catalyzes the prenylation of para-hydroxybenzoate (PHB) with an all-trans polyprenyl group. Mediates the second step in the final reaction sequence of ubiquinone-8 (UQ-8) biosynthesis, which is the condensation of the polyisoprenoid side chain with PHB, generating the first membrane-bound Q intermediate 3-octaprenyl-4-hydroxybenzoate. The chain is 4-hydroxybenzoate octaprenyltransferase from Escherichia coli (strain SE11).